The sequence spans 178 residues: Large ribosomal subunit protein uL6 (178 aa).

It belongs to the universal ribosomal protein uL6 family. In terms of assembly, part of the 50S ribosomal subunit.

In terms of biological role, this protein binds to the 23S rRNA, and is important in its secondary structure. It is located near the subunit interface in the base of the L7/L12 stalk, and near the tRNA binding site of the peptidyltransferase center. The chain is Large ribosomal subunit protein uL6 from Staphylococcus epidermidis (strain ATCC 35984 / DSM 28319 / BCRC 17069 / CCUG 31568 / BM 3577 / RP62A).